The chain runs to 284 residues: Cystinosin homolog (284 aa).

The next 7 membrane-spanning stretches (helical) occupy residues 3-23 (ALSIISIIIGWIYFACWSLSF), 37-57 (IGLSFDFLLFNITGYACYSVF), 86-106 (IAFAIHGFVLTAITIIQCFIY), 116-136 (LGIGIATLIWVSLIVMTILGF), 139-159 (VFTWLWVINYYSYVKLFITFI), 181-201 (NVLLDFSGGVLSLLQMFLDVA), and 216-236 (LGLSLFSIAFDILFIIQHYIL). Positions 4–70 (LSIISIIIGW…LYFDKLVKNE (67 aa)) constitute a PQ-loop 1 domain. Residues 154–208 (LFITFIKYIPQAYLNFKNKSTSGWSVHNVLLDFSGGVLSLLQMFLDVADSGNWNI) enclose the PQ-loop 2 domain. Residues 247–269 (NLNDNNIPNNNNNNNNNINNNTP) form a disordered region.

The protein belongs to the cystinosin family.

Its subcellular location is the lysosome membrane. The enzyme catalyses L-cystine(out) + H(+)(out) = L-cystine(in) + H(+)(in). Its function is as follows. Cystine/H(+) symporter that mediates export of cystine, the oxidized dimer of cysteine, from lysosomes. This Dictyostelium discoideum (Social amoeba) protein is Cystinosin homolog (ctns).